A 436-amino-acid polypeptide reads, in one-letter code: Chromosomal replication initiator protein DnaA (436 aa).

Positions 1-80 are domain I, interacts with DnaA modulators; the sequence is MSHEAVWQHV…QAPRFELRVV (80 aa). The domain II stretch occupies residues 80-100; it reads VPGVVVQEDIFQAAPAEAPRP. Positions 101–317 are domain III, AAA+ region; sequence KLNPKYTFEN…GALMRAIAFA (217 aa). 4 residues coordinate ATP: Gly-145, Gly-147, Lys-148, and Thr-149. The segment at 318–436 is domain IV, binds dsDNA; sequence SLNGVELTRA…LLRTLREACT (119 aa).

Belongs to the DnaA family. In terms of assembly, oligomerizes as a right-handed, spiral filament on DNA at oriC.

The protein localises to the cytoplasm. The enzyme catalyses ATP + H2O = ADP + phosphate + H(+). In terms of biological role, plays an essential role in the initiation and regulation of chromosomal replication. ATP-DnaA binds to the origin of replication (oriC) to initiate formation of the DNA replication initiation complex once per cell cycle. Binds the DnaA box (a 9 base pair repeat at the origin) and separates the double-stranded (ds)DNA. Forms a right-handed helical filament on oriC DNA; dsDNA binds to the exterior of the filament while single-stranded (ss)DNA is stabiized in the filament's interior. The ATP-DnaA-oriC complex binds and stabilizes one strand of the AT-rich DNA unwinding element (DUE), permitting loading of DNA polymerase. After initiation quickly degrades to an ADP-DnaA complex that is not apt for DNA replication. Binds acidic phospholipids. Functionally, the DnaA box consensus is 5'-TTATC[CA]A[CA]A-3' in this bacterium; oriC consists of 13 clustered DnaA boxes and a 40 base pair AT-rich region. ATP-DnaA binds cooperatively to multiple DnaA boxes, while ADP-DnaA binds with low cooperativity to the individual DnaA boxes. About 16-18 DnaA protein molecules bind their sites in oriC. Has a slow ATPase activity. Binds linear and supercoiled DNA. The protein is Chromosomal replication initiator protein DnaA of Thermus thermophilus (strain ATCC 27634 / DSM 579 / HB8).